The following is a 1076-amino-acid chain: MAAEKLRDLSQPIDVVLLDATVEAFYSTGSKEERASADNILRDLKANPDTWLQVVHILQNTSSTHTKFFALQVLEGVIKYRWNALPVEQRDGMKNYISDVIVQLSRDEASFRTERLYVNKLNIILVQIVKQEWPAKWKSFIPDLVIAAKTSETICENCMAILKLLSEEVFDFSKGEMTQQKIKELKQSLNSEFQLIHELCLYVLSASQRQELIRATLSALHAYLSWIPLGYIFESPLLEILLKFFPVPAYRNLTLQCLSEVASLNFGDFYDMQYVKMYSIFMNQLQAILPLNLNIPEAYSTGSSEEQAFIQNLALFFTSFFKLHIKILESAPENISLLLAGLGYLISISYVDDTEVFKVCLDYWNSLVLELFGTRHHACHPALTPSLFGLQMAFLPSTVDGVKSEVTERQKLYSDPMSKLRGLMISRTAKPEEVLIVEDENGNIVRETMKDNDVLVQYKIMRETLIYLSHLDHEDTEKQMLSKLSKQLSGEEWAWNNLNTLCWAIGSISGSMVVEQENRFLVMVIRDLLSLCEVVKGKDNKAVIASNIMYVVGQYSRFLRAHWKFLKTVVHKLFEFMHETHPGVQDMACDTFLKIVQKCKRKFVIVQVGESEPFVSELLSGLATIVGDLQPHQIHTFYESVGSMIQAESDPQKRGEYLQRLMALPNQKWAEIIGQARQSADILKEPDVIRTVLNILQTNTRVATSLGTFFLSQISLIFLDMLNVYRMYSELVSSSIANGGPYASRTSLVKLLRSVKREILKLIETFLDKAENQPHIGKQFVPPMMDQVLGDYARNVPDARESEVLSLFATIINKYKVVMRDEVPLIFEAVFQCTLEMITKNFEDYPEHRLKFFSLLRAIATFCFRALIQLSSEQLKLVMDSVIWAFRHTERNIAETGLNLLLEMLKNFQKSDFCNKFYQTYFLQIEQEVFAVLTDTFHKPGFKLHVLVLQHLFSLVESGSLAEPLWDAATVPHPYSNNVAFVLEYTTKLLSSSFPNMTTTEVTQFVNGLYESRNDVGRFKDNIRDFLIQSKEFSAQDNKDLYAEEAAAQMERERQRMLSIPGLIAPSEIQDDMADS.

An Importin N-terminal domain is found at 37 to 103 (ADNILRDLKA…KNYISDVIVQ (67 aa)). HEAT repeat units lie at residues 135-171 (AKWK…EVFD), 232-267 (IFES…LNFG), 282-319 (MNQL…FFTS), 475-514 (DTEK…SMVV), 564-601 (KFLK…KCKR), 613-650 (PFVS…AESD), 683-720 (LKEP…IFLD), 757-794 (REIL…DYAR), 799-836 (ARES…CTLE), 895-935 (ETGL…VLTD), and 943-988 (KLHV…YTTK).

The protein belongs to the exportin family. Present in mature pollen grains, unpollinated pistils, and 2-week-old seedlings.

The protein localises to the nucleus. The protein resides in the nuclear pore complex. Its subcellular location is the nucleus membrane. Functionally, receptor for the leucine-rich nuclear export signal (NES). Binds cooperatively to the NES on its target protein and to the small GTPase Ran in its active GTP-bound form. Required for the maternal-to-embryonic transition and during gametophyte development. In Arabidopsis thaliana (Mouse-ear cress), this protein is Protein EXPORTIN 1B.